Consider the following 983-residue polypeptide: GPI ethanolamine phosphate transferase 2, catalytic subunit (983 aa).

Residues 1 to 431 (MRLGSGTFAT…SLSAQVAQYD (431 aa)) are Lumenal-facing. An N-linked (GlcNAc...) asparagine glycan is attached at asparagine 194. Transmembrane regions (helical) follow at residues 432–452 (IYSM…LLLS), 471–491 (GFSL…VIVC), 506–526 (LAAG…VSVL), 552–572 (LLIL…SFVE), 699–719 (VLAA…CSPV), 721–741 (KAAL…IGSV), 752–772 (ISKG…ILFT), 789–809 (LKTV…ALLF), 812–832 (HNLP…KFIW), 879–899 (VEIP…VLWA), 919–939 (ACFC…VLVT), and 955–975 (LLYE…FTAM).

Belongs to the PIGG/PIGN/PIGO family. PIGG subfamily. In terms of assembly, part of the ethanolamine phosphate transferase 2 complex composed by PIGG and PIGF. PIGF is required to stabilize it. Competes with PIGO for the binding of PIGF.

Its subcellular location is the endoplasmic reticulum membrane. It participates in glycolipid biosynthesis; glycosylphosphatidylinositol-anchor biosynthesis. Functionally, catalytic subunit of the ethanolamine phosphate transferase 2 complex that transfers an ethanolamine phosphate (EtNP) from a phosphatidylethanolamine (PE) to the 6-OH position of the second alpha-1,6-linked mannose of a 6-PEtn-alpha-D-Man-(1-&gt;2)-alpha-D-Man-(1-&gt;6)-2-PEtn-alpha-D-Man-(1-&gt;4)-alpha-D-GlcN-(1-&gt;6)-(1-radyl,2-acyl-sn-glycero-3-phospho)-2-acyl-inositol (also termed H7) intermediate to generate a 6-PEtn-alpha-D-Man-(1-&gt;2)-6-PEtn-alpha-D-Man-(1-&gt;6)-2-PEtn-alpha-D-Man-(1-&gt;4)-alpha-D-GlcN-(1-&gt;6)-(1-radyl,2-acyl-sn-glycero-3-phospho)-2-acyl-inositol (also termed H8) and participates in the eleventh step of the glycosylphosphatidylinositol-anchor biosynthesis. The sequence is that of GPI ethanolamine phosphate transferase 2, catalytic subunit from Homo sapiens (Human).